Reading from the N-terminus, the 486-residue chain is Protein nucleotidyltransferase YdiU (486 aa).

Residues G90, G92, R93, K113, D125, G126, R176, and R183 each coordinate ATP. Catalysis depends on D252, which acts as the Proton acceptor. 2 residues coordinate Mg(2+): N253 and D262. D262 is a binding site for ATP.

This sequence belongs to the SELO family. The cofactor is Mg(2+). Requires Mn(2+) as cofactor.

It carries out the reaction L-seryl-[protein] + ATP = 3-O-(5'-adenylyl)-L-seryl-[protein] + diphosphate. The catalysed reaction is L-threonyl-[protein] + ATP = 3-O-(5'-adenylyl)-L-threonyl-[protein] + diphosphate. It catalyses the reaction L-tyrosyl-[protein] + ATP = O-(5'-adenylyl)-L-tyrosyl-[protein] + diphosphate. The enzyme catalyses L-histidyl-[protein] + UTP = N(tele)-(5'-uridylyl)-L-histidyl-[protein] + diphosphate. It carries out the reaction L-seryl-[protein] + UTP = O-(5'-uridylyl)-L-seryl-[protein] + diphosphate. The catalysed reaction is L-tyrosyl-[protein] + UTP = O-(5'-uridylyl)-L-tyrosyl-[protein] + diphosphate. Functionally, nucleotidyltransferase involved in the post-translational modification of proteins. It can catalyze the addition of adenosine monophosphate (AMP) or uridine monophosphate (UMP) to a protein, resulting in modifications known as AMPylation and UMPylation. The polypeptide is Protein nucleotidyltransferase YdiU (Pseudomonas aeruginosa (strain ATCC 15692 / DSM 22644 / CIP 104116 / JCM 14847 / LMG 12228 / 1C / PRS 101 / PAO1)).